The chain runs to 356 residues: UDP-N-acetylglucosamine--N-acetylmuramyl-(pentapeptide) pyrophosphoryl-undecaprenol N-acetylglucosamine transferase (356 aa).

The UDP-N-acetyl-alpha-D-glucosamine site is built by Ser198 and Gln289.

It belongs to the glycosyltransferase 28 family. MurG subfamily.

The protein resides in the cell membrane. The enzyme catalyses Mur2Ac(oyl-L-Ala-gamma-D-Glu-L-Lys-D-Ala-D-Ala)-di-trans,octa-cis-undecaprenyl diphosphate + UDP-N-acetyl-alpha-D-glucosamine = beta-D-GlcNAc-(1-&gt;4)-Mur2Ac(oyl-L-Ala-gamma-D-Glu-L-Lys-D-Ala-D-Ala)-di-trans,octa-cis-undecaprenyl diphosphate + UDP + H(+). It functions in the pathway cell wall biogenesis; peptidoglycan biosynthesis. Cell wall formation. Catalyzes the transfer of a GlcNAc subunit on undecaprenyl-pyrophosphoryl-MurNAc-pentapeptide (lipid intermediate I) to form undecaprenyl-pyrophosphoryl-MurNAc-(pentapeptide)GlcNAc (lipid intermediate II). The protein is UDP-N-acetylglucosamine--N-acetylmuramyl-(pentapeptide) pyrophosphoryl-undecaprenol N-acetylglucosamine transferase of Streptococcus thermophilus (strain CNRZ 1066).